The following is a 265-amino-acid chain: Uridylate kinase (265 aa).

A disordered region spans residues 1–29; it reads MTESREPHVAGSAAPRPEPANGLASGQPS. An ATP-binding site is contributed by 40-43; it reads KLGG. Gly-81 is a binding site for UMP. 2 residues coordinate ATP: Gly-82 and Arg-86. UMP is bound by residues Asp-101 and 162–169; that span reads MGLPYFST. Residues Phe-195 and Asp-198 each coordinate ATP.

Belongs to the UMP kinase family. As to quaternary structure, homohexamer.

It localises to the cytoplasm. The enzyme catalyses UMP + ATP = UDP + ADP. Its pathway is pyrimidine metabolism; CTP biosynthesis via de novo pathway; UDP from UMP (UMPK route): step 1/1. Inhibited by UTP. Catalyzes the reversible phosphorylation of UMP to UDP. In Mycobacterium avium (strain 104), this protein is Uridylate kinase.